Here is a 429-residue protein sequence, read N- to C-terminus: E3 ubiquitin-protein ligase ZNRF4 (429 aa).

A signal peptide spans 1 to 27; the sequence is MLRCRPEPLMPRATRVAVAVSLPLSHA. Over 28–250 the chain is Lumenal; that stretch reads VIPTQLPSHP…PPCRDLDCHP (223 aa). Residues 30 to 64 form a disordered region; that stretch reads PTQLPSHPGHRPSGRPRRCPKAPCLPSPVGLSSTQ. Basic residues predominate over residues 37–49; sequence PGHRPSGRPRRCP. An N-linked (GlcNAc...) asparagine glycan is attached at Asn-152. A PA domain is found at 152-223; sequence NRSLGAIALI…VGEAASQDLR (72 aa). A helical transmembrane segment spans residues 251-271; that stretch reads VLTVSWALGRTLALVVSTLFV. The Cytoplasmic portion of the chain corresponds to 272–429; it reads LNRLWLWAQA…SPAPPEAPGQ (158 aa). The segment at 309–352 adopts an RING-type; atypical zinc-finger fold; the sequence is CAICLDEYEEGDQLKILPCSHTYHCKCIDPWFSQAPRRSCPVCK. 2 disordered regions span residues 358–381 and 409–429; these read TEDSFDSTTDSFSDEDPSLPGHRP and TTSLEAEDTTVSPAPPEAPGQ. Over residues 409 to 420 the composition is skewed to polar residues; that stretch reads TTSLEAEDTTVS.

In terms of assembly, interacts with CANX.

The protein localises to the endoplasmic reticulum membrane. It catalyses the reaction S-ubiquitinyl-[E2 ubiquitin-conjugating enzyme]-L-cysteine + [acceptor protein]-L-lysine = [E2 ubiquitin-conjugating enzyme]-L-cysteine + N(6)-ubiquitinyl-[acceptor protein]-L-lysine.. The protein operates within protein modification; protein ubiquitination. In terms of biological role, E3 ubiquitin-protein ligase that acts as a negative regulator of NOD2 signaling by mediating ubiquitination and degradation of RIPK2. Also catalyzes ubiquitination and proteasomal degradation of CANX within the endoplasmic reticulum. Could have a role in spermatogenesis. In Macaca fascicularis (Crab-eating macaque), this protein is E3 ubiquitin-protein ligase ZNRF4 (ZNRF4).